Consider the following 447-residue polypeptide: ATP-dependent 6-phosphofructokinase (447 aa).

ATP contacts are provided by residues G88, 154–155 (RG), and 179–182 (GDGT). Mg(2+) is bound at residue D180. Substrate is bound by residues 208–210 (TVD), 253–255 (MGR), E315, and 368–371 (YIIR). Catalysis depends on D210, which acts as the Proton acceptor.

The protein belongs to the phosphofructokinase type A (PFKA) family. PPi-dependent PFK group II subfamily. Atypical ATP-dependent clade 'X' sub-subfamily. Homodimer. Requires Mg(2+) as cofactor.

It localises to the cytoplasm. The enzyme catalyses beta-D-fructose 6-phosphate + ATP = beta-D-fructose 1,6-bisphosphate + ADP + H(+). It participates in carbohydrate degradation; glycolysis; D-glyceraldehyde 3-phosphate and glycerone phosphate from D-glucose: step 3/4. Catalyzes the phosphorylation of D-fructose 6-phosphate to fructose 1,6-bisphosphate by ATP, the first committing step of glycolysis. The polypeptide is ATP-dependent 6-phosphofructokinase (Borreliella burgdorferi (strain ATCC 35210 / DSM 4680 / CIP 102532 / B31) (Borrelia burgdorferi)).